The following is a 1177-amino-acid chain: Chromosome partition protein Smc (1177 aa).

34-41 serves as a coordination point for ATP; it reads ANGSGKSN. Residues 167-506 adopt a coiled-coil conformation; that stretch reads SGIAEYDSKK…IAAEAQREVR (340 aa). The 107-residue stretch at 521–627 folds into the SMC hinge domain; it reads GIYGTLAELI…VIVNSMEEAR (107 aa). The stretch at 659–1012 forms a coiled coil; that stretch reads LAVDTTKLRE…NEIEKEKKNV (354 aa).

This sequence belongs to the SMC family. In terms of assembly, homodimer.

It localises to the cytoplasm. In terms of biological role, required for chromosome condensation and partitioning. Binds single-stranded but not double-stranded DNA. In Pyrococcus furiosus (strain ATCC 43587 / DSM 3638 / JCM 8422 / Vc1), this protein is Chromosome partition protein Smc.